The following is a 293-amino-acid chain: Protease HtpX (293 aa).

The next 2 membrane-spanning stretches (helical) occupy residues 4–24 (IALFLLTNLAVMVVFGLVLSL) and 34–54 (GLLIMALLFGFGGSFISLLMS). Zn(2+) is bound at residue H139. E140 is an active-site residue. Residue H143 coordinates Zn(2+). 2 helical membrane passes run 158-178 (VVNTFVIFISRILAQIAAGFM) and 193-213 (LIYFAVAMVLELVFGILASII). Position 222 (E222) interacts with Zn(2+).

This sequence belongs to the peptidase M48B family. The cofactor is Zn(2+).

It localises to the cell inner membrane. The protein is Protease HtpX of Enterobacter sp. (strain 638).